A 150-amino-acid polypeptide reads, in one-letter code: Small ribosomal subunit protein eS19 (150 aa).

It belongs to the eukaryotic ribosomal protein eS19 family. In terms of assembly, part of the 30S ribosomal subunit.

May be involved in maturation of the 30S ribosomal subunit. In Pyrococcus abyssi (strain GE5 / Orsay), this protein is Small ribosomal subunit protein eS19 (rps19e).